The primary structure comprises 958 residues: Transportin MOS14 (958 aa).

Residues A26–K93 form the Importin N-terminal domain.

This sequence belongs to the importin beta family. Interacts with RS2Z33, RSZ21, RS31A, SR34 and RAN1.

It localises to the nucleus. Functions as a nuclear import receptor for serine-arginine rich (SR) proteins. Regulates nuclear import of SR proteins that are required for proper splicing of the two resistance (R) genes SNC1 and RPS4, a crucial step for their functions in plant immunity. The polypeptide is Transportin MOS14 (Arabidopsis thaliana (Mouse-ear cress)).